The sequence spans 377 residues: N5-carboxyaminoimidazole ribonucleotide synthase (377 aa).

Residues Arg93, Lys133, 138–144 (GYDGKGQ), 175–178 (EEFV), Glu183, His206, and 257–258 (NE) contribute to the ATP site. In terms of domain architecture, ATP-grasp spans 97–287 (KALLDNAGVR…QFENHLRAVC (191 aa)).

The protein belongs to the PurK/PurT family. As to quaternary structure, homodimer.

The enzyme catalyses 5-amino-1-(5-phospho-beta-D-ribosyl)imidazole + hydrogencarbonate + ATP = 5-carboxyamino-1-(5-phospho-D-ribosyl)imidazole + ADP + phosphate + 2 H(+). The protein operates within purine metabolism; IMP biosynthesis via de novo pathway; 5-amino-1-(5-phospho-D-ribosyl)imidazole-4-carboxylate from 5-amino-1-(5-phospho-D-ribosyl)imidazole (N5-CAIR route): step 1/2. Functionally, catalyzes the ATP-dependent conversion of 5-aminoimidazole ribonucleotide (AIR) and HCO(3)(-) to N5-carboxyaminoimidazole ribonucleotide (N5-CAIR). This is N5-carboxyaminoimidazole ribonucleotide synthase from Vibrio parahaemolyticus serotype O3:K6 (strain RIMD 2210633).